Reading from the N-terminus, the 298-residue chain is Tyrosine recombinase XerD (298 aa).

In terms of domain architecture, Core-binding (CB) spans 3-88 (TLEHPLIDRF…GLRGFYRYCL (86 aa)). The Tyr recombinase domain maps to 109–292 (PLPKSLSEAD…ARARLQDLHA (184 aa)). Active-site residues include Arg-149, Lys-173, His-244, Arg-247, and His-270. Tyr-279 acts as the O-(3'-phospho-DNA)-tyrosine intermediate in catalysis.

It belongs to the 'phage' integrase family. XerD subfamily. As to quaternary structure, forms a cyclic heterotetrameric complex composed of two molecules of XerC and two molecules of XerD.

The protein resides in the cytoplasm. Functionally, site-specific tyrosine recombinase, which acts by catalyzing the cutting and rejoining of the recombining DNA molecules. The XerC-XerD complex is essential to convert dimers of the bacterial chromosome into monomers to permit their segregation at cell division. It also contributes to the segregational stability of plasmids. In Pseudomonas aeruginosa (strain ATCC 15692 / DSM 22644 / CIP 104116 / JCM 14847 / LMG 12228 / 1C / PRS 101 / PAO1), this protein is Tyrosine recombinase XerD.